A 521-amino-acid chain; its full sequence is Cytochrome P450 1A1 (521 aa).

Phe-229 contacts substrate. A heme-binding site is contributed by Cys-463.

It belongs to the cytochrome P450 family. It depends on heme as a cofactor.

It localises to the endoplasmic reticulum membrane. The protein localises to the microsome membrane. The enzyme catalyses an organic molecule + reduced [NADPH--hemoprotein reductase] + O2 = an alcohol + oxidized [NADPH--hemoprotein reductase] + H2O + H(+). Functionally, cytochromes P450 are a group of heme-thiolate monooxygenases. They oxidize a variety of structurally unrelated compounds, including steroids, fatty acids, and xenobiotics. This is Cytochrome P450 1A1 (cyp1a1) from Chaetodon capistratus (Four-eye butterflyfish).